We begin with the raw amino-acid sequence, 224 residues long: Coiled-coil domain-containing protein 43 (224 aa).

Lys-95 participates in a covalent cross-link: Glycyl lysine isopeptide (Lys-Gly) (interchain with G-Cter in SUMO1). Coiled-coil stretches lie at residues 121–145 (SEEE…EDEA) and 177–218 (RKLE…KRTQ). Residues 138 to 149 (VTDEEDEADEKD) are compositionally biased toward acidic residues. Disordered regions lie at residues 138 to 157 (VTDE…TTMN) and 176 to 224 (ARKL…ERKR). Thr-139 is modified (phosphothreonine). Positions 176–211 (ARKLERDSLRDESQRKKEQDKLQRERDKLAKQERKE) are enriched in basic and acidic residues. Positions 212 to 224 (KEKKRTQRGERKR) are enriched in basic residues.

Belongs to the CCDC43 family.

In Homo sapiens (Human), this protein is Coiled-coil domain-containing protein 43 (CCDC43).